The sequence spans 78 residues: uncharacterized protein (78 aa).

The interval 49 to 78 (QRASLERSNSIRNLQSQGKRRSDSKESRKL) is disordered. Positions 54–65 (ERSNSIRNLQSQ) are enriched in polar residues. A compositionally biased stretch (basic and acidic residues) spans 68-78 (RRSDSKESRKL).

This is an uncharacterized protein from Saccharomyces cerevisiae (strain ATCC 204508 / S288c) (Baker's yeast).